The sequence spans 443 residues: RILP-like protein homolog (443 aa).

The RH1 domain occupies 8-96 (EMGEMVLDAI…ESEKLEKAEF (89 aa)). Residues 59 to 315 (LELLEALATK…TLNEQLAELK (257 aa)) are a coiled coil. An RH2 domain is found at 282 to 401 (RPRYTTRELK…KSSESGIRKF (120 aa)). The interval 311 to 394 (LAELKPPSQA…PDDAPWKKSS (84 aa)) is disordered. Over residues 332–355 (DDSDEDDDGHVADNDDDDDEEEAA) the composition is skewed to acidic residues. Residues 356–368 (AEANELEPPAAGE) are compositionally biased toward low complexity.

It belongs to the RILPL family. Interacts with Arl8 (in GTP-bound form).

The protein resides in the lysosome membrane. May have a role in lysosome distribution by interacting with Arl8. The chain is RILP-like protein homolog from Drosophila melanogaster (Fruit fly).